Reading from the N-terminus, the 762-residue chain is PHD finger protein 20-like protein 1 (762 aa).

2 Tudor domains span residues 11–71 (ITFE…LERP) and 85–141 (VDFK…EDAK). Disordered regions lie at residues 178 to 231 (AKNK…TSSD), 289 to 359 (AEKK…CIKP), 383 to 411 (SVIN…RSQR), 536 to 559 (SLKL…EGTE), and 613 to 651 (LSGK…QHDY). Residues 193-211 (NKDKEERKWLKVPSKKEET) show a composition bias toward basic and acidic residues. Composition is skewed to polar residues over residues 319 to 340 (DISS…SSGK) and 383 to 398 (SVIN…NSPR). The span at 399–410 (SYKHSQRRRRSQ) shows a compositional bias: basic residues. Over residues 614-632 (SGKKKEKEKEKKEKKEKDH) the composition is skewed to basic and acidic residues. Residues 633-647 (KSKQKKKKKKKKKSK) are compositionally biased toward basic residues.

It is found in the nucleus. Its function is as follows. Is a negative regulator of proteasomal degradation of methylated proteins. Involved in the maintainance of pluripotency of embryonic stem cells. The chain is PHD finger protein 20-like protein 1 (PHF20L1) from Gallus gallus (Chicken).